We begin with the raw amino-acid sequence, 302 residues long: MSLSGIITALVTPFDRDGAFDRDAWIRLLDMQLAGGVQGVVIAGSTGEAATLTDAEYDEMLCSAVVRVGGRVPVLAGTGLSGTAKTISQTKRAADNGAGYALVVTPPYIRPNQGGLKAHYLAVAEQGGLPVVLYNVPSRTGCDLLPETVADLAGHPNIVGIKEACASRERVQALLALRRPGFAVFSGDDSSAARSMLDGADGLVSVASNVLPSAYRHLCDLARAGERGAIDLWNARLSDFHAFCGLDSNPIPIKALLQRIGIGYGLRLPLLPLSVCHHDIADHLADQVAALEALSSRKIVTA.

Threonine 46 is a binding site for pyruvate. The active-site Proton donor/acceptor is the tyrosine 134. Catalysis depends on lysine 162, which acts as the Schiff-base intermediate with substrate. Pyruvate is bound at residue valine 204.

This sequence belongs to the DapA family. As to quaternary structure, homotetramer; dimer of dimers.

It localises to the cytoplasm. It carries out the reaction L-aspartate 4-semialdehyde + pyruvate = (2S,4S)-4-hydroxy-2,3,4,5-tetrahydrodipicolinate + H2O + H(+). The protein operates within amino-acid biosynthesis; L-lysine biosynthesis via DAP pathway; (S)-tetrahydrodipicolinate from L-aspartate: step 3/4. Catalyzes the condensation of (S)-aspartate-beta-semialdehyde [(S)-ASA] and pyruvate to 4-hydroxy-tetrahydrodipicolinate (HTPA). The chain is 4-hydroxy-tetrahydrodipicolinate synthase from Xylella fastidiosa (strain Temecula1 / ATCC 700964).